The sequence spans 693 residues: Polyphosphate kinase (693 aa).

Asparagine 57 serves as a coordination point for ATP. Positions 383 and 413 each coordinate Mg(2+). The active-site Phosphohistidine intermediate is histidine 443. Residues tyrosine 476, arginine 572, and histidine 601 each contribute to the ATP site.

It belongs to the polyphosphate kinase 1 (PPK1) family. It depends on Mg(2+) as a cofactor. In terms of processing, an intermediate of this reaction is the autophosphorylated ppk in which a phosphate is covalently linked to a histidine residue through a N-P bond.

The catalysed reaction is [phosphate](n) + ATP = [phosphate](n+1) + ADP. Catalyzes the reversible transfer of the terminal phosphate of ATP to form a long-chain polyphosphate (polyP). This is Polyphosphate kinase from Acinetobacter baumannii (strain ATCC 17978 / DSM 105126 / CIP 53.77 / LMG 1025 / NCDC KC755 / 5377).